The primary structure comprises 318 residues: Potassium channel subfamily K member 15 (318 aa).

At 1-8 (MRKQSART) the chain is on the cytoplasmic side. A helical transmembrane segment spans residues 9-29 (AALILCILSYLLVGAAVFDAL). The pore-forming intramembrane region spans 80 to 101 (FAGSFYFAITVITTIGYGHAAP). A helical membrane pass occupies residues 108–128 (VFCMFYALLGIPLTLVTFQSL). Residues 129–158 (GERLNALVRCLLLAAKRCLGLRRPHVSAEN) are Cytoplasmic-facing. The helical transmembrane segment at 159–179 (MVVAGLLLCAATLALGAAAFA) threads the bilayer. Positions 189-209 (AYYYCFITLTTIGFGDFVALQ) form an intramembrane region, pore-forming. The helical transmembrane segment at 223–243 (FSFLYILLGLTVIGAFLNLVV) threads the bilayer. Topologically, residues 244 to 318 (LRFLASAEAP…DRLRARRKSI (75 aa)) are cytoplasmic. A disordered region spans residues 296 to 318 (LSPEAVHDCHSSPDRLRARRKSI). Residues 300–311 (AVHDCHSSPDRL) show a composition bias toward basic and acidic residues.

This sequence belongs to the two pore domain potassium channel (TC 1.A.1.8) family. In terms of assembly, heterodimer. Post-translationally, phosphorylated. Brain-specific. Highly expressed in auditory nuclei, in Purkinje cells and in olfactory bulb mitral cells.

The protein localises to the membrane. Its function is as follows. Probable potassium channel subunit. No channel activity observed in heterologous systems. May need to associate with another protein to form a functional channel. This is Potassium channel subfamily K member 15 (Kcnk15) from Rattus norvegicus (Rat).